The chain runs to 309 residues: tRNA dimethylallyltransferase (309 aa).

Gly-13 to Thr-20 is an ATP binding site. Thr-15–Thr-20 lines the substrate pocket. 2 interaction with substrate tRNA regions span residues Asp-38–Gln-41 and Gln-162–Arg-166.

The protein belongs to the IPP transferase family. In terms of assembly, monomer. Mg(2+) serves as cofactor.

The enzyme catalyses adenosine(37) in tRNA + dimethylallyl diphosphate = N(6)-dimethylallyladenosine(37) in tRNA + diphosphate. Functionally, catalyzes the transfer of a dimethylallyl group onto the adenine at position 37 in tRNAs that read codons beginning with uridine, leading to the formation of N6-(dimethylallyl)adenosine (i(6)A). The protein is tRNA dimethylallyltransferase of Nitratidesulfovibrio vulgaris (strain ATCC 29579 / DSM 644 / CCUG 34227 / NCIMB 8303 / VKM B-1760 / Hildenborough) (Desulfovibrio vulgaris).